A 370-amino-acid chain; its full sequence is Dual-specificity RNA methyltransferase RlmN (370 aa).

E93 (proton acceptor) is an active-site residue. The 239-residue stretch at 99 to 337 folds into the Radical SAM core domain; it reads EEGRGTLCVS…VTTVRKTRGD (239 aa). A disulfide bridge connects residues C106 and C343. 3 residues coordinate [4Fe-4S] cluster: C113, C117, and C120. Residues 167–168, S199, 221–223, and N300 contribute to the S-adenosyl-L-methionine site; these read GE and SLH. C343 serves as the catalytic S-methylcysteine intermediate.

Belongs to the radical SAM superfamily. RlmN family. [4Fe-4S] cluster is required as a cofactor.

It is found in the cytoplasm. The enzyme catalyses adenosine(2503) in 23S rRNA + 2 reduced [2Fe-2S]-[ferredoxin] + 2 S-adenosyl-L-methionine = 2-methyladenosine(2503) in 23S rRNA + 5'-deoxyadenosine + L-methionine + 2 oxidized [2Fe-2S]-[ferredoxin] + S-adenosyl-L-homocysteine. It catalyses the reaction adenosine(37) in tRNA + 2 reduced [2Fe-2S]-[ferredoxin] + 2 S-adenosyl-L-methionine = 2-methyladenosine(37) in tRNA + 5'-deoxyadenosine + L-methionine + 2 oxidized [2Fe-2S]-[ferredoxin] + S-adenosyl-L-homocysteine. Specifically methylates position 2 of adenine 2503 in 23S rRNA and position 2 of adenine 37 in tRNAs. m2A2503 modification seems to play a crucial role in the proofreading step occurring at the peptidyl transferase center and thus would serve to optimize ribosomal fidelity. The protein is Dual-specificity RNA methyltransferase RlmN of Francisella tularensis subsp. novicida (strain U112).